The primary structure comprises 309 residues: Olfactory receptor 1A2 (309 aa).

At 1–25 the chain is on the extracellular side; the sequence is MKKENQSFNLDFILLGVTSQQEQNN. N-linked (GlcNAc...) asparagine glycosylation is present at N5. The helical transmembrane segment at 26–49 threads the bilayer; that stretch reads VFFVIFLCIYPITLTGNLLIILAI. Topologically, residues 50–57 are cytoplasmic; that stretch reads CADIRLHN. A helical membrane pass occupies residues 58-79; it reads PMYFLLANLSLVDIIFSSVTIP. Residues 80-100 are Extracellular-facing; sequence KVLANHLLGSKFISFGGCLMQ. C97 and C189 are oxidised to a cystine. Residues 101-120 form a helical membrane-spanning segment; the sequence is MYFMIALAKADSYTLAAMAY. At 121–139 the chain is on the cytoplasmic side; the sequence is DRAVAISCPLHYTTIMSPR. Residues 140–158 form a helical membrane-spanning segment; that stretch reads SCILLIAGSWVIGNTSALP. Residues 159-195 are Extracellular-facing; sequence HTLLTASLSFCGNQEVANFYCDIMPLLKLSCSDVHFN. The chain crosses the membrane as a helical span at residues 196–218; it reads VKMMYLGVGVFSLPLLCIIVSYV. Topologically, residues 219-235 are cytoplasmic; the sequence is QVFSTVFQVPSTKSLFK. Residues 236 to 258 form a helical membrane-spanning segment; that stretch reads AFCTCGSHLTVVFLYYGTTMGMY. Topologically, residues 259–270 are extracellular; sequence FRPLTSYSPKDA. The helical transmembrane segment at 271–290 threads the bilayer; that stretch reads VITVMYVAVTPALNPFIYSL. Over 291-309 the chain is Cytoplasmic; sequence RNWDMKAALQKLFSKRISS.

It belongs to the G-protein coupled receptor 1 family.

Its subcellular location is the cell membrane. In terms of biological role, odorant receptor. The chain is Olfactory receptor 1A2 (OR1A2) from Homo sapiens (Human).